The chain runs to 158 residues: NAD(P)H-quinone oxidoreductase subunit J, chloroplastic (158 aa).

It belongs to the complex I 30 kDa subunit family. As to quaternary structure, NDH is composed of at least 16 different subunits, 5 of which are encoded in the nucleus.

It localises to the plastid. Its subcellular location is the chloroplast thylakoid membrane. The catalysed reaction is a plastoquinone + NADH + (n+1) H(+)(in) = a plastoquinol + NAD(+) + n H(+)(out). The enzyme catalyses a plastoquinone + NADPH + (n+1) H(+)(in) = a plastoquinol + NADP(+) + n H(+)(out). In terms of biological role, NDH shuttles electrons from NAD(P)H:plastoquinone, via FMN and iron-sulfur (Fe-S) centers, to quinones in the photosynthetic chain and possibly in a chloroplast respiratory chain. The immediate electron acceptor for the enzyme in this species is believed to be plastoquinone. Couples the redox reaction to proton translocation, and thus conserves the redox energy in a proton gradient. The chain is NAD(P)H-quinone oxidoreductase subunit J, chloroplastic from Nuphar advena (Common spatterdock).